A 229-amino-acid chain; its full sequence is UPF0128 protein aq_756 (229 aa).

This sequence belongs to the UPF0128 family.

The protein is UPF0128 protein aq_756 of Aquifex aeolicus (strain VF5).